A 160-amino-acid chain; its full sequence is Eosinophil cationic protein (160 aa).

The signal sequence occupies residues Met-1–Ala-27. The segment at Lys-28–Arg-72 is required for nearly all of the bactericidal activities; partially involved in LPS-binding. Residue His-42 is the Proton acceptor of the active site. Cystine bridges form between Cys-50–Cys-110, Cys-64–Cys-123, Cys-82–Cys-138, and Cys-89–Cys-98. Tyr-60 bears the 3'-nitrotyrosine mark. Lys-65–Thr-69 lines the substrate pocket. N-linked (GlcNAc...) asparagine glycosylation is found at Asn-86, Asn-92, Asn-111, and Asn-119. The active-site Proton donor is the His-155.

This sequence belongs to the pancreatic ribonuclease family. In terms of assembly, interacts with bacterial lipopolysaccharide (LPS) and lipoteichoic acid (LTA). In vitro interacts with phospholipid bilayers.

The protein resides in the secreted. Its function is as follows. Cytotoxin and helminthotoxin with low-efficiency ribonuclease activity. Possesses a wide variety of biological activities. Exhibits antibacterial activity. In Pongo pygmaeus (Bornean orangutan), this protein is Eosinophil cationic protein (RNASE3).